The following is a 436-amino-acid chain: 3-ketoacyl-CoA thiolase (436 aa).

Cys-99 (acyl-thioester intermediate) is an active-site residue. Residues His-392 and Cys-422 each act as proton acceptor in the active site.

This sequence belongs to the thiolase-like superfamily. Thiolase family. As to quaternary structure, heterotetramer of two alpha chains (FadJ) and two beta chains (FadI).

It localises to the cytoplasm. The catalysed reaction is an acyl-CoA + acetyl-CoA = a 3-oxoacyl-CoA + CoA. Its pathway is lipid metabolism; fatty acid beta-oxidation. Catalyzes the final step of fatty acid oxidation in which acetyl-CoA is released and the CoA ester of a fatty acid two carbons shorter is formed. In Salmonella dublin (strain CT_02021853), this protein is 3-ketoacyl-CoA thiolase.